Consider the following 275-residue polypeptide: Ribosomal RNA small subunit methyltransferase A (275 aa).

Residues Asn-28, Leu-30, Gly-55, Glu-77, Asp-103, and Asn-123 each contribute to the S-adenosyl-L-methionine site.

The protein belongs to the class I-like SAM-binding methyltransferase superfamily. rRNA adenine N(6)-methyltransferase family. RsmA subfamily.

Its subcellular location is the cytoplasm. The catalysed reaction is adenosine(1518)/adenosine(1519) in 16S rRNA + 4 S-adenosyl-L-methionine = N(6)-dimethyladenosine(1518)/N(6)-dimethyladenosine(1519) in 16S rRNA + 4 S-adenosyl-L-homocysteine + 4 H(+). Specifically dimethylates two adjacent adenosines (A1518 and A1519) in the loop of a conserved hairpin near the 3'-end of 16S rRNA in the 30S particle. May play a critical role in biogenesis of 30S subunits. The protein is Ribosomal RNA small subunit methyltransferase A of Allorhizobium ampelinum (strain ATCC BAA-846 / DSM 112012 / S4) (Agrobacterium vitis (strain S4)).